A 221-amino-acid chain; its full sequence is Protein-L-isoaspartate O-methyltransferase (221 aa).

Residue serine 70 is part of the active site.

The protein belongs to the methyltransferase superfamily. L-isoaspartyl/D-aspartyl protein methyltransferase family.

The protein localises to the cytoplasm. The catalysed reaction is [protein]-L-isoaspartate + S-adenosyl-L-methionine = [protein]-L-isoaspartate alpha-methyl ester + S-adenosyl-L-homocysteine. Catalyzes the methyl esterification of L-isoaspartyl residues in peptides and proteins that result from spontaneous decomposition of normal L-aspartyl and L-asparaginyl residues. It plays a role in the repair and/or degradation of damaged proteins. This Alkalilimnicola ehrlichii (strain ATCC BAA-1101 / DSM 17681 / MLHE-1) protein is Protein-L-isoaspartate O-methyltransferase.